Here is an 89-residue protein sequence, read N- to C-terminus: Small ribosomal subunit protein bS20 (89 aa).

The tract at residues 1–26 (MANIKASKKDALTSEKRRKKNSSRRS) is disordered. Basic residues predominate over residues 16–26 (KRRKKNSSRRS).

Belongs to the bacterial ribosomal protein bS20 family.

Binds directly to 16S ribosomal RNA. This Buchnera aphidicola subsp. Acyrthosiphon pisum (strain 5A) protein is Small ribosomal subunit protein bS20.